We begin with the raw amino-acid sequence, 538 residues long: MVKQLKFSEDARQAMLRGVDQLANAVKVTIGPKGRNVVLDKEFTAPLITNDGVTIAKEIELEDPYENMGAKLVQEVANKTNEIAGDGTTTATVLAQAMIQEGLKNVTSGANPVGLRQGIDKAVKVAVEALHENSQKVENKNEIAQVGAISAADEEIGRYISEAMEKVGNDGVITIEESNGLNTELEVVEGMQFDRGYQSPYMVTDSDKMVAELERPYILVTDKKISSFQDILPLLEQVVQSNRPILIVADEVEGDALTNIVLNRMRGTFTAVAVKAPGFGDRRKAMLEDLAILTGAQVITDDLGLDLKDATIDMLGTASKVEVTKDNTTVVDGDGDENSIDARVSQLKSQIEETESDFDREKLQERLAKLAGGVAVIKVGAASETELKERKLRIEDALNSTRAAVEEGIVAGGGTALVNVYQKVSEIEAEGDIETGVNIVLKALTAPVRQIAENAGLEGSVIVERLKNAEPGVGFNAATNEWVNMLEVGIVDPTKVTRSALQHAASVAAMFLTTEAVVASIPEKNNDQPNMGGMPGMM.

ATP-binding positions include 29 to 32 (TIGP), 86 to 90 (DGTTT), Gly413, 476 to 478 (NAA), and Asp492.

Belongs to the chaperonin (HSP60) family. In terms of assembly, forms a cylinder of 14 subunits composed of two heptameric rings stacked back-to-back. Interacts with the co-chaperonin GroES.

Its subcellular location is the cytoplasm. The catalysed reaction is ATP + H2O + a folded polypeptide = ADP + phosphate + an unfolded polypeptide.. Together with its co-chaperonin GroES, plays an essential role in assisting protein folding. The GroEL-GroES system forms a nano-cage that allows encapsulation of the non-native substrate proteins and provides a physical environment optimized to promote and accelerate protein folding. This Staphylococcus aureus (strain MRSA252) protein is Chaperonin GroEL.